The following is a 511-amino-acid chain: MEDIKDSKVKRFCSKNILIILGFSSVLAVIALIAVGLTHNKPLPENVKYGIVLDAGSSHTNLYIYKWPAEKENDTGVVQLLEECQVKGPGISKYAQKTDEIAAYLAECMKMSTERIPASKQHQTPVYLGATAGMRLLRMESKQSADEVLAAVSRSLKSYPFDFQGAKIITGQEEGAYGWITINYLLGRFTQEQSWLNFISDSQKQATFGALDLGGSSTQVTFVPLNQTLEAPETSLQFRLYGTDYTVYTHSFLCYGKDQALWQKLAQDIQVSSGGILKDPCFYPGYKKVVNVSELYGTPCTKRFEKKLPFNQFQVQGTGDYEQCHQSILKFFNNSHCPYSQCAFNGVFLPPLQGSFGAFSAFYFVMDFFKKMANDSVSSQEKMTEITKNFCSKPWEEVKASYPTVKEKYLSEYCFSGTYILSLLLQGYNFTGTSWDQIHFMGKIKDSNAGWTLGYMLNLTNMIPAEQPLSPPLPHSTYISLMVLFSLVLVAMVITGLFIFSKPSYFWKEAV.

Residues 1-16 (MEDIKDSKVKRFCSKN) are Cytoplasmic-facing. A helical membrane pass occupies residues 17–37 (ILIILGFSSVLAVIALIAVGL). At 38-478 (THNKPLPENV…LSPPLPHSTY (441 aa)) the chain is on the extracellular side. The segment at 46 to 171 (NVKYGIVLDA…DFQGAKIITG (126 aa)) is N-terminal lobe. N-linked (GlcNAc...) asparagine glycosylation is present at Asn73. Cys84 and Cys108 form a disulfide bridge. The Proton acceptor role is filled by Glu174. The tract at residues 205-441 (QATFGALDLG…GTSWDQIHFM (237 aa)) is C-terminal lobe. N-linked (GlcNAc...) asparagine glycans are attached at residues Asn226, Asn291, and Asn333. Disulfide bonds link Cys254–Cys300 and Cys281–Cys324. Cys337 and Cys342 are disulfide-bonded. A glycan (N-linked (GlcNAc...) asparagine) is linked at Asn374. A disulfide bridge links Cys391 with Cys414. N-linked (GlcNAc...) asparagine glycosylation is found at Asn429 and Asn458. A helical membrane pass occupies residues 479–499 (ISLMVLFSLVLVAMVITGLFI). At 500 to 511 (FSKPSYFWKEAV) the chain is on the cytoplasmic side.

Belongs to the GDA1/CD39 NTPase family. As to quaternary structure, homodimer; disulfide-linked. It depends on Ca(2+) as a cofactor. Requires Mg(2+) as cofactor. In terms of processing, N-glycosylated. The N-terminus is blocked. Post-translationally, palmitoylated on Cys-13; which is required for caveola targeting. As to expression, expressed in primary neurons and astrocytes, kidney, liver, muscle, thymus, lung and spleen.

It localises to the membrane. Its subcellular location is the caveola. It carries out the reaction a ribonucleoside 5'-triphosphate + 2 H2O = a ribonucleoside 5'-phosphate + 2 phosphate + 2 H(+). The catalysed reaction is a ribonucleoside 5'-triphosphate + H2O = a ribonucleoside 5'-diphosphate + phosphate + H(+). The enzyme catalyses a ribonucleoside 5'-diphosphate + H2O = a ribonucleoside 5'-phosphate + phosphate + H(+). It catalyses the reaction ATP + 2 H2O = AMP + 2 phosphate + 2 H(+). It carries out the reaction ATP + H2O = ADP + phosphate + H(+). The catalysed reaction is ADP + H2O = AMP + phosphate + H(+). The enzyme catalyses CTP + 2 H2O = CMP + 2 phosphate + 2 H(+). It catalyses the reaction CTP + H2O = CDP + phosphate + H(+). It carries out the reaction CDP + H2O = CMP + phosphate + H(+). The catalysed reaction is GTP + 2 H2O = GMP + 2 phosphate + 2 H(+). The enzyme catalyses GTP + H2O = GDP + phosphate + H(+). It catalyses the reaction GDP + H2O = GMP + phosphate + H(+). It carries out the reaction ITP + 2 H2O = IMP + 2 phosphate + 2 H(+). The catalysed reaction is ITP + H2O = IDP + phosphate + H(+). The enzyme catalyses IDP + H2O = IMP + phosphate + H(+). It catalyses the reaction UTP + 2 H2O = UMP + 2 phosphate + 2 H(+). It carries out the reaction UTP + H2O = UDP + phosphate + H(+). The catalysed reaction is UDP + H2O = UMP + phosphate + H(+). Functionally, catalyzes the hydrolysis of both di- and triphosphate nucleotides (NDPs and NTPs) and hydrolyze NTPs to nucleotide monophosphates (NMPs) in two distinct successive phosphate-releasing steps, with NDPs as intermediates and participates in the regulation of extracellular levels of nucleotides. By hydrolyzing proinflammatory ATP and platelet-activating ADP to AMP, it blocks platelet aggregation and supports blood flow. The protein is Ectonucleoside triphosphate diphosphohydrolase 1 of Rattus norvegicus (Rat).